Here is a 727-residue protein sequence, read N- to C-terminus: Engulfment and cell motility protein 1 (727 aa).

Position 18 is a phosphotyrosine; by HCK (Tyr18). Residues Lys100 and Lys105 each carry the N6-acetyllysine modification. Tyr216 bears the Phosphotyrosine; by HCK mark. The ELMO domain maps to 319–492 (AQRDIIFELR…VVKEQVMRAL (174 aa)). Ser344 is modified (phosphoserine). A phosphotyrosine; by HCK mark is found at Tyr395 and Tyr511. The 122-residue stretch at 555–676 (RLVEGTCFRK…DGLNALLGKD (122 aa)) folds into the PH domain. The SH3-binding motif lies at 707–714 (PDAPPPIP). Tyr720 is modified (phosphotyrosine; by HCK).

In terms of assembly, interacts directly with the SH3-domain of DOCK1 via its SH3-binding site. Probably forms a heterotrimeric complex with DOCK1 and RAC1. Interacts with PLEKHG6. Interacts with HCK (via SH3 domain). Interacts with ADGRB1. Interacts with ADGRB3. Interacts with DOCK5. In terms of processing, phosphorylated by HCK.

Its subcellular location is the cytoplasm. The protein localises to the cell membrane. In terms of biological role, involved in cytoskeletal rearrangements required for phagocytosis of apoptotic cells and cell motility. Acts in association with DOCK1 and CRK. Was initially proposed to be required in complex with DOCK1 to activate Rac Rho small GTPases. May enhance the guanine nucleotide exchange factor (GEF) activity of DOCK1. This is Engulfment and cell motility protein 1 (Elmo1) from Mus musculus (Mouse).